An 823-amino-acid chain; its full sequence is Ubiquitin carboxyl-terminal hydrolase 16 (823 aa).

The segment at Pro-22–Ala-142 adopts a UBP-type zinc-finger fold. Cys-24, His-26, Cys-48, Cys-51, Cys-74, Cys-77, Cys-82, His-90, His-94, His-103, Cys-116, and Cys-119 together coordinate Zn(2+). Lys-140 is covalently cross-linked (Glycyl lysine isopeptide (Lys-Gly) (interchain with G-Cter in SUMO2)). The segment at Thr-146 to Ser-189 is disordered. Residues Pro-149 to Ala-181 show a composition bias toward basic and acidic residues. Ser-189 carries the post-translational modification Phosphoserine. One can recognise a USP domain in the interval Lys-196 to Ile-822. Cys-205 acts as the Nucleophile in catalysis. The segment covering Ser-394–Val-408 has biased composition (basic and acidic residues). Residues Ser-394–Ile-460 form a disordered region. Residues Glu-409 to Asp-420 are compositionally biased toward acidic residues. Ser-415 is modified (phosphoserine). A compositionally biased stretch (basic and acidic residues) spans Asn-421 to Asp-430. Residues His-438–Gln-458 show a composition bias toward basic residues. 2 positions are modified to phosphoserine: Ser-531 and Ser-552. Thr-554 carries the phosphothreonine modification. The Proton acceptor role is filled by His-758.

It belongs to the peptidase C19 family. USP16 subfamily. Homotetramer. Associates with late pre-40S ribosomes. Interacts with CEP78; promoting deubiquitination of tektins. Post-translationally, phosphorylated at the onset of mitosis and dephosphorylated during the metaphase/anaphase transition. Phosphorylation by AURKB enhances the deubiquitinase activity. Present in all the tissues examined including fetal brain, lung, liver, kidney, and adult heart, brain, placenta, lung, liver, skeletal muscle, kidney and pancreas.

The protein localises to the nucleus. Its subcellular location is the cytoplasm. It carries out the reaction Thiol-dependent hydrolysis of ester, thioester, amide, peptide and isopeptide bonds formed by the C-terminal Gly of ubiquitin (a 76-residue protein attached to proteins as an intracellular targeting signal).. In terms of biological role, specifically deubiquitinates 'Lys-120' of histone H2A (H2AK119Ub), a specific tag for epigenetic transcriptional repression, thereby acting as a coactivator. Deubiquitination of histone H2A is a prerequisite for subsequent phosphorylation at 'Ser-11' of histone H3 (H3S10ph), and is required for chromosome segregation when cells enter into mitosis. In resting B- and T-lymphocytes, phosphorylation by AURKB leads to enhance its activity, thereby maintaining transcription in resting lymphocytes. Regulates Hox gene expression via histone H2A deubiquitination. Prefers nucleosomal substrates. Does not deubiquitinate histone H2B. Also deubiquitinates non-histone proteins, such as ribosomal protein RPS27A: deubiquitination of monoubiquitinated RPS27A promotes maturation of the 40S ribosomal subunit. Also mediates deubiquitination of tektin proteins (TEKT1, TEKT2, TEK3, TEKT4 and TEKT5), promoting their stability. This chain is Ubiquitin carboxyl-terminal hydrolase 16, found in Homo sapiens (Human).